The following is a 513-amino-acid chain: RNA-binding protein FUS (513 aa).

Over residues 1 to 14 (MASNDYTQQATQSY) the composition is skewed to polar residues. The interval 1 to 273 (MASNDYTQQA…SEQDNSDNNT (273 aa)) is disordered. 3 stretches are compositionally biased toward low complexity: residues 20–36 (QPGQGYSQQSNQPYGQQ), 43–63 (QSTDTSGYGQSSYSGSYGQTQ), and 84–124 (SSQS…SGYG). Gly residues predominate over residues 125 to 139 (QPQGGGYGQQSGYGG). A compositionally biased stretch (low complexity) spans 140-164 (QQQSYGQQQSYNPPQGYGQQSQYNS). Composition is skewed to gly residues over residues 165-176 (SGGGGGGGGGSY) and 185-219 (SGGGGGGYGNQDQSGGYGGGQQDRGGRGRGGGGGY). Arg-211 and Arg-213 each carry asymmetric dimethylarginine; alternate. An omega-N-methylarginine; alternate mark is found at Arg-211 and Arg-213. Arg-229, Arg-231, Arg-235, Arg-238, and Arg-246 each carry asymmetric dimethylarginine. A compositionally biased stretch (gly residues) spans 231-246 (RGGGRGGRGGMGGSDR). At Ser-264 the chain carries Phosphoserine. The 87-residue stretch at 272 to 358 (NTIFVQGLGE…NPIKVSFATR (87 aa)) folds into the RRM domain. The residue at position 273 (Thr-273) is a Phosphothreonine. A Glycyl lysine isopeptide (Lys-Gly) (interchain with G-Cter in SUMO2) cross-link involves residue Lys-321. Residue Ser-327 is modified to Phosphoserine. Disordered stretches follow at residues 362-411 (FNRG…QRAG) and 431-513 (CNQC…ERPY). Asymmetric dimethylarginine is present on residues Arg-364, Arg-370, Arg-373, Arg-375, and Arg-381. The segment covering 364–408 (RGGGNGRGGRGRGGPMGRGGYGGGGSGGGGRGGFPSGGGGGGGQQ) has biased composition (gly residues). Arg-394 carries the post-translational modification Asymmetric dimethylarginine; alternate. Residue Arg-394 is modified to Omega-N-methylarginine; alternate. The RanBP2-type zinc-finger motif lies at 409-440 (RAGDWKCPNPTCENMNFSWRNECNQCKAPKPD). Gly residues predominate over residues 441-455 (GPGGGPGGSHMGGNY). The segment covering 456–480 (GDDRRGGRGGYDRGGYRGRGGDRGG) has biased composition (basic and acidic residues). 8 positions are modified to asymmetric dimethylarginine: Arg-460, Arg-463, Arg-468, Arg-472, Arg-474, Arg-478, Arg-482, and Arg-485. Over residues 481–495 (FRGGRGGGDRGGFGP) the composition is skewed to gly residues. An Asymmetric dimethylarginine; alternate modification is found at Arg-490. Omega-N-methylarginine; alternate is present on Arg-490. Positions 498 to 513 (MDSRGEHRQDRRERPY) are enriched in basic and acidic residues.

The protein belongs to the RRM TET family. In terms of assembly, self-oligomerizes (via N-terminal region). Oligomerization is essential for chromatin binding. Component of nuclear riboprotein complexes. Interacts with ILF3, TDRD3 and SF1. Interacts through its C-terminus with SFRS13A. Interacts with OTUB1 and SARNP. Interacts with LRSAM1. Interacts with SAFB1 in a DNA-dependent manner; this interaction tethers FUS to chromatin. Interacts with MATR3. Interacts with SNRNP70 and POLR2A; these interactions couple RNA transcription and splicing. Interacts (through its RNA-binding domain) with RALY (through its RNA-binding domain); both are components of the same RNPs. In terms of processing, phosphorylated in its N-terminal serine residues upon induced DNA damage. ATM and DNA-PK are able to phosphorylate FUS N-terminal region.

It localises to the nucleus. Its function is as follows. DNA/RNA-binding protein that plays a role in various cellular processes such as transcription regulation, RNA splicing, RNA transport, DNA repair and damage response. Binds to ssRNA containing the consensus sequence 5'-AGGUAA-3'. Binds to nascent pre-mRNAs and acts as a molecular mediator between RNA polymerase II and U1 small nuclear ribonucleoprotein thereby coupling transcription and splicing. Also binds its own pre-mRNA and autoregulates its expression; this autoregulation mechanism is mediated by non-sense-mediated decay. Plays a role in DNA repair mechanisms by promoting D-loop formation and homologous recombination during DNA double-strand break repair. In neuronal cells, plays crucial roles in dendritic spine formation and stability, RNA transport, mRNA stability and synaptic homeostasis. This is RNA-binding protein FUS (FUS) from Bos taurus (Bovine).